We begin with the raw amino-acid sequence, 88 residues long: MAHKKGASSSSNGRDSEAKRLGVKRFGGQQVSAGEILVRQRGTKFHPGENVGRGGDDTLFALKTGAVQFSTKRNRRLVNIVETEAVDA.

The tract at residues 1 to 26 (MAHKKGASSSSNGRDSEAKRLGVKRF) is disordered.

It belongs to the bacterial ribosomal protein bL27 family.

The protein is Large ribosomal subunit protein bL27 of Corynebacterium glutamicum (strain R).